The primary structure comprises 219 residues: Ribose-5-phosphate isomerase A (219 aa).

Substrate-binding positions include Ser28–Thr31, Asp81–Asp84, and Lys94–Gly97. Glu103 functions as the Proton acceptor in the catalytic mechanism. Lys121 contributes to the substrate binding site.

It belongs to the ribose 5-phosphate isomerase family. In terms of assembly, homodimer.

The catalysed reaction is aldehydo-D-ribose 5-phosphate = D-ribulose 5-phosphate. The protein operates within carbohydrate degradation; pentose phosphate pathway; D-ribose 5-phosphate from D-ribulose 5-phosphate (non-oxidative stage): step 1/1. Catalyzes the reversible conversion of ribose-5-phosphate to ribulose 5-phosphate. The polypeptide is Ribose-5-phosphate isomerase A (Actinobacillus succinogenes (strain ATCC 55618 / DSM 22257 / CCUG 43843 / 130Z)).